The chain runs to 685 residues: Kinesin-related protein 11 (685 aa).

One can recognise a Kinesin motor domain in the interval 4–405; that stretch reads NISVSVRARP…LKFASRAKKI (402 aa). The interval 36–105 is disordered; that stretch reads TSLPPPITQP…TTVPASPAPT (70 aa). A compositionally biased stretch (low complexity) spans 47–105; the sequence is SSLPPISTPIKSSSSSSTSTSAGSLKTPLKTPLKTPLKTPLKTNSTTTNTTVPASPAPT. 156-163 contributes to the ATP binding site; the sequence is GITSSGKT. The stretch at 411 to 488 forms a coiled coil; the sequence is VNEILDDKAL…KINNLNKLIL (78 aa). A disordered region spans residues 495-568; sequence NSASKGGSGS…QSTSSLTIGG (74 aa). The segment covering 511 to 520 has biased composition (polar residues); that stretch reads RSTFVSPSQN. Residues 533–565 show a composition bias toward low complexity; sequence PNSFSNLLLQSPSQNNNNNSHISPLSQSTSSLT. The stretch at 574-683 forms a coiled coil; that stretch reads FESNELIQIQ…LKSKIQEYEV (110 aa).

This sequence belongs to the TRAFAC class myosin-kinesin ATPase superfamily. Kinesin family.

It is found in the cytoplasm. It localises to the cytoskeleton. Its function is as follows. Microtubule-associated force-producing protein that plays a role in organelle transport. Its motor activity is directed toward the microtubule's plus end. This is Kinesin-related protein 11 (kif11) from Dictyostelium discoideum (Social amoeba).